Reading from the N-terminus, the 331-residue chain is MNLKNRHFLKLLDFTPEEITAYLDLAAELKAAKKAGREIQRMKGKNIALIFEKTSTRTRCAFEVAARDQGAGVTYLEPSASQIGHKESIKDTARVLGRMYDAIEYRGFGQETVEELAKYAGVPVFNGLTNEFHPTQMLADALTMREHSGKPLNQTAFAYVGDARYNMGNSLLILGAKLGMDVRIGAPQSLWPSEGIIAAAHAAAKETGAKITLTENAHEAVKNVDFIHTDVWVSMGEPKEVWQERIDLLKDYRVTPELMAASGNPQVKFMHCLPAFHNRETKVGEWIYETFGLNGVEVTEEVFESPASIVFDQAENRMHTIKAVMVAALGD.

Carbamoyl phosphate-binding positions include 55-58 (STRT), Gln82, Arg106, and 133-136 (HPTQ). Residues Asn166, Asp230, and 234–235 (SM) contribute to the L-ornithine site. Carbamoyl phosphate contacts are provided by residues 272-273 (CL) and Arg317.

Belongs to the aspartate/ornithine carbamoyltransferase superfamily. OTCase family.

The protein localises to the cytoplasm. It carries out the reaction carbamoyl phosphate + L-ornithine = L-citrulline + phosphate + H(+). It participates in amino-acid biosynthesis; L-arginine biosynthesis; L-arginine from L-ornithine and carbamoyl phosphate: step 1/3. In terms of biological role, reversibly catalyzes the transfer of the carbamoyl group from carbamoyl phosphate (CP) to the N(epsilon) atom of ornithine (ORN) to produce L-citrulline. The protein is Ornithine carbamoyltransferase (argF) of Neisseria meningitidis serogroup A / serotype 4A (strain DSM 15465 / Z2491).